A 713-amino-acid chain; its full sequence is Phosphoribosylformylglycinamidine synthase subunit PurL (713 aa).

H34 is a catalytic residue. Residues Y37 and R73 each coordinate ATP. Mg(2+) is bound at residue E75. Substrate contacts are provided by residues 76–79 (SHNH) and R98. The active-site Proton acceptor is H77. D99 contacts Mg(2+). Q221 serves as a coordination point for substrate. D249 contributes to the Mg(2+) binding site. Residue 292–294 (ESQ) participates in substrate binding. D474 and G511 together coordinate ATP. S514 serves as a coordination point for substrate.

It belongs to the FGAMS family. In terms of assembly, monomer. Part of the FGAM synthase complex composed of 1 PurL, 1 PurQ and 2 PurS subunits.

It localises to the cytoplasm. It carries out the reaction N(2)-formyl-N(1)-(5-phospho-beta-D-ribosyl)glycinamide + L-glutamine + ATP + H2O = 2-formamido-N(1)-(5-O-phospho-beta-D-ribosyl)acetamidine + L-glutamate + ADP + phosphate + H(+). The protein operates within purine metabolism; IMP biosynthesis via de novo pathway; 5-amino-1-(5-phospho-D-ribosyl)imidazole from N(2)-formyl-N(1)-(5-phospho-D-ribosyl)glycinamide: step 1/2. Functionally, part of the phosphoribosylformylglycinamidine synthase complex involved in the purines biosynthetic pathway. Catalyzes the ATP-dependent conversion of formylglycinamide ribonucleotide (FGAR) and glutamine to yield formylglycinamidine ribonucleotide (FGAM) and glutamate. The FGAM synthase complex is composed of three subunits. PurQ produces an ammonia molecule by converting glutamine to glutamate. PurL transfers the ammonia molecule to FGAR to form FGAM in an ATP-dependent manner. PurS interacts with PurQ and PurL and is thought to assist in the transfer of the ammonia molecule from PurQ to PurL. The polypeptide is Phosphoribosylformylglycinamidine synthase subunit PurL (Ignicoccus hospitalis (strain KIN4/I / DSM 18386 / JCM 14125)).